The primary structure comprises 464 residues: 3-isopropylmalate dehydratase large subunit (464 aa).

Positions 337, 397, and 400 each coordinate [4Fe-4S] cluster.

The protein belongs to the aconitase/IPM isomerase family. LeuC type 1 subfamily. Heterodimer of LeuC and LeuD. [4Fe-4S] cluster is required as a cofactor.

It catalyses the reaction (2R,3S)-3-isopropylmalate = (2S)-2-isopropylmalate. The protein operates within amino-acid biosynthesis; L-leucine biosynthesis; L-leucine from 3-methyl-2-oxobutanoate: step 2/4. Functionally, catalyzes the isomerization between 2-isopropylmalate and 3-isopropylmalate, via the formation of 2-isopropylmaleate. The polypeptide is 3-isopropylmalate dehydratase large subunit (Bacillus cereus (strain ATCC 10987 / NRS 248)).